A 293-amino-acid chain; its full sequence is Glutamine sensor pib2 (293 aa).

The interval 38-75 (APTRQATNGTGSVSGSPNSSSNSTPANQGSLPSHTNPQ) is disordered. Positions 44-62 (TNGTGSVSGSPNSSSNSTP) are enriched in low complexity. A compositionally biased stretch (polar residues) spans 63–75 (ANQGSLPSHTNPQ). The FYVE-type; degenerate zinc finger occupies 156 to 220 (DVSVCSFPSC…SCVSCFYEYL (65 aa)). Zn(2+) contacts are provided by cysteine 178, cysteine 181, cysteine 212, and cysteine 215. Residues 242 to 256 (APQQATTHPPSQPKN) show a composition bias toward polar residues. The interval 242 to 276 (APQQATTHPPSQPKNAVSVPIPKMDSTDSKGELPS) is disordered. Residue serine 259 is modified to Phosphoserine.

In terms of assembly, interacts with the TORC1 complex when activated by glutamine or cysteine.

The protein localises to the vacuole membrane. With respect to regulation, activated by glutamine. In terms of biological role, functions as an intracellular glutamine sensor that directly activates the TORC1 signaling pathway, to promote cell growth when glutamine is available. In Schizosaccharomyces pombe (strain 972 / ATCC 24843) (Fission yeast), this protein is Glutamine sensor pib2.